A 100-amino-acid polypeptide reads, in one-letter code: Aspartyl/glutamyl-tRNA(Asn/Gln) amidotransferase subunit C (100 aa).

The protein belongs to the GatC family. Heterotrimer of A, B and C subunits.

The enzyme catalyses L-glutamyl-tRNA(Gln) + L-glutamine + ATP + H2O = L-glutaminyl-tRNA(Gln) + L-glutamate + ADP + phosphate + H(+). It catalyses the reaction L-aspartyl-tRNA(Asn) + L-glutamine + ATP + H2O = L-asparaginyl-tRNA(Asn) + L-glutamate + ADP + phosphate + 2 H(+). Allows the formation of correctly charged Asn-tRNA(Asn) or Gln-tRNA(Gln) through the transamidation of misacylated Asp-tRNA(Asn) or Glu-tRNA(Gln) in organisms which lack either or both of asparaginyl-tRNA or glutaminyl-tRNA synthetases. The reaction takes place in the presence of glutamine and ATP through an activated phospho-Asp-tRNA(Asn) or phospho-Glu-tRNA(Gln). In Staphylococcus carnosus (strain TM300), this protein is Aspartyl/glutamyl-tRNA(Asn/Gln) amidotransferase subunit C.